A 217-amino-acid polypeptide reads, in one-letter code: DNA repair protein homolog YobH (217 aa).

Positions 1 to 68 (MAKAIQSSMW…RPLSKMWGIG (68 aa)) constitute a UmuC domain.

This sequence belongs to the DNA polymerase type-Y family.

This Bacillus subtilis (strain 168) protein is DNA repair protein homolog YobH (yobH).